An 847-amino-acid chain; its full sequence is Bifunctional protein argC, mitochondrial (847 aa).

The segment at 100–331 (QIVLVKIGGG…PPSTSITITS (232 aa)) is acetylglutamate kinase. Residues 352–508 (GEVMHSHESP…CLSQSSTYLS (157 aa)) enclose the N-acetyltransferase domain. The interval 531 to 846 (FRVGLIGARG…LDELASIKNE (316 aa)) is N-acetyl-gamma-glutamyl-phosphate reductase. Residue C665 is part of the active site.

In the N-terminal section; belongs to the acetylglutamate kinase family. This sequence in the C-terminal section; belongs to the NAGSA dehydrogenase family.

It is found in the mitochondrion. The catalysed reaction is N-acetyl-L-glutamate 5-semialdehyde + phosphate + NADP(+) = N-acetyl-L-glutamyl 5-phosphate + NADPH + H(+). It carries out the reaction N-acetyl-L-glutamate + ATP = N-acetyl-L-glutamyl 5-phosphate + ADP. It functions in the pathway amino-acid biosynthesis; L-arginine biosynthesis; N(2)-acetyl-L-ornithine from L-glutamate: step 2/4. Its pathway is amino-acid biosynthesis; L-arginine biosynthesis; N(2)-acetyl-L-ornithine from L-glutamate: step 3/4. The protein is Bifunctional protein argC, mitochondrial (argC) of Dictyostelium discoideum (Social amoeba).